Consider the following 277-residue polypeptide: Pantothenate synthetase (277 aa).

Position 26-33 (26-33 (MGNLHEGH)) interacts with ATP. His-33 functions as the Proton donor in the catalytic mechanism. Gln-57 is a binding site for (R)-pantoate. Residue Gln-57 coordinates beta-alanine. 144-147 (GKKD) serves as a coordination point for ATP. (R)-pantoate is bound at residue Gln-150. ATP contacts are provided by residues Gly-173 and 181–184 (LSSR).

The protein belongs to the pantothenate synthetase family. In terms of assembly, homodimer.

Its subcellular location is the cytoplasm. It catalyses the reaction (R)-pantoate + beta-alanine + ATP = (R)-pantothenate + AMP + diphosphate + H(+). It functions in the pathway cofactor biosynthesis; (R)-pantothenate biosynthesis; (R)-pantothenate from (R)-pantoate and beta-alanine: step 1/1. In terms of biological role, catalyzes the condensation of pantoate with beta-alanine in an ATP-dependent reaction via a pantoyl-adenylate intermediate. This chain is Pantothenate synthetase, found in Laribacter hongkongensis (strain HLHK9).